A 99-amino-acid polypeptide reads, in one-letter code: MSCYTAILKSVGGLALFQVANGAIDLCRHFFMYFCEQKLRPNSFWFVVVRAIASMIMYLVLGIALLYISEQDDKKNTNNDGSNNDKRNESSINSNSSPK.

Positions 1 to 22 (MSCYTAILKSVGGLALFQVANG) are cleaved as a signal peptide. Over 23 to 45 (AIDLCRHFFMYFCEQKLRPNSFW) the chain is Intravirion. Residues 46–66 (FVVVRAIASMIMYLVLGIALL) traverse the membrane as a helical segment. Topologically, residues 67–83 (YISEQDDKKNTNNDGSN) are virion surface. Residues 73-89 (DKKNTNNDGSNNDKRNE) are compositionally biased toward basic and acidic residues. Residues 73–99 (DKKNTNNDGSNNDKRNESSINSNSSPK) form a disordered region. A glycan (N-linked (GlcNAc...) asparagine; by host) is linked at N88. The span at 90 to 99 (SSINSNSSPK) shows a compositional bias: polar residues.

This sequence belongs to the oerthopoxvirus OPG135 family.

It localises to the virion membrane. Its subcellular location is the host cytoplasm. Its function is as follows. Envelope protein. Required for an early step in virion morphogenesis. This chain is Virion membrane protein OPG135 (OPG135), found in Homo sapiens (Human).